A 203-amino-acid chain; its full sequence is Gramillins biosynthetic cluster protein FGSG_00038 (203 aa).

It functions in the pathway mycotoxin biosynthesis. Its function is as follows. Part of the gene cluster that mediates the biosynthesis of gramillins A and B, bicyclic lipopeptides that induce cell death in maize leaves but not in wheat leaves. The nonribosomal peptide synthetase GRA1 incorporates respectively a glutamic adic (Glu), a leucine (Leu), a serine (Ser), a hydroxyglutamine (HOGln), a 2-amino decanoic acid, and 2 cysteins (CysB and CysA). The biosynthesis of 2-amino decanoic acid incorporated in gramillins could be initiated by a fatty acid synthase composed of the alpha and beta subunits FGSG_00036 and FGSG_11656. The cytochrome P450 monooxygenase FGSG_15680 could hydroxylate the fatty acid chain. Subsequent oxidation to the ketone by the oxidoreductase FGSG_00048 and transamination by aminotransferase FGSG_00049 could form 2-amino-decanoic acid. On the other hand, FGSG_15680 could also be responsible for the HO-modified glutamine at the gamma-position. Whether hydroxylation occurs on the fully assembled product or on the Gln residue prior to assembly into the gramillins requires further proof. The thioredoxin FGSG_00043 could also be required for the disulfide-bond formation between CysA and CysB. The specific involvement of the remaining proteins from the cluster is more difficult to discern, but could have broader regulatory (FGSG_00040 and FGSG_11657) or enzymatic functions (FGSG_00044 and FGSG_00045). The final C-domain of GRA1 does not possess the expected sequence of a termination CT domain, often implicated in macrocyclization and release of a cyclopeptidein fungal NRPs; and the thioesterase FGSG_00047 may act in concert with the terminal C-domain of GRA1 to catalyze the formation of the macrocyclic anhydride and release of the products. In Gibberella zeae (strain ATCC MYA-4620 / CBS 123657 / FGSC 9075 / NRRL 31084 / PH-1) (Wheat head blight fungus), this protein is Gramillins biosynthetic cluster protein FGSG_00038.